The primary structure comprises 108 residues: Large ribosomal subunit protein uL24 (108 aa).

The protein belongs to the universal ribosomal protein uL24 family. Part of the 50S ribosomal subunit.

Functionally, one of two assembly initiator proteins, it binds directly to the 5'-end of the 23S rRNA, where it nucleates assembly of the 50S subunit. One of the proteins that surrounds the polypeptide exit tunnel on the outside of the subunit. The polypeptide is Large ribosomal subunit protein uL24 (Trichlorobacter lovleyi (strain ATCC BAA-1151 / DSM 17278 / SZ) (Geobacter lovleyi)).